The primary structure comprises 91 residues: Thioredoxin (91 aa).

The Thioredoxin domain occupies 2 to 91 (SDSIVHVTDD…SRQSEVEATK (90 aa)). A disulfide bond links Cys33 and Cys36.

Belongs to the thioredoxin family.

Functionally, participates in various redox reactions through the reversible oxidation of its active center dithiol to a disulfide and catalyzes dithiol-disulfide exchange reactions. The protein is Thioredoxin (trxA) of Thiocapsa roseopersicina.